The primary structure comprises 503 residues: AMP phosphorylase (503 aa).

Residues Gly168, Ser194 to Ser199, and Thr203 each bind AMP. Asp256 (proton donor) is an active-site residue. AMP is bound by residues Ser264 and Lys288.

This sequence belongs to the thymidine/pyrimidine-nucleoside phosphorylase family. Type 2 subfamily.

The enzyme catalyses AMP + phosphate = alpha-D-ribose 1,5-bisphosphate + adenine. The catalysed reaction is CMP + phosphate = cytosine + alpha-D-ribose 1,5-bisphosphate. It catalyses the reaction UMP + phosphate = alpha-D-ribose 1,5-bisphosphate + uracil. Its function is as follows. Catalyzes the conversion of AMP and phosphate to adenine and ribose 1,5-bisphosphate (R15P). Exhibits phosphorylase activity toward CMP and UMP in addition to AMP. Functions in an archaeal AMP degradation pathway, together with R15P isomerase and RubisCO. This Methanocaldococcus jannaschii (strain ATCC 43067 / DSM 2661 / JAL-1 / JCM 10045 / NBRC 100440) (Methanococcus jannaschii) protein is AMP phosphorylase.